The sequence spans 559 residues: uncharacterized protein (559 aa).

Residues 1 to 10 (MSGRRGDHPG) are compositionally biased toward basic and acidic residues. Residues 1–76 (MSGRRGDHPG…ERSRVPPRTT (76 aa)) are disordered. A run of 11 helical transmembrane segments spans residues 128 to 148 (FAVDSAMAVALANTLFFAAAS), 155 to 175 (VALYLLITIAPFAVIAPLIGP), 186 to 206 (VALALSFGLRTALAVVLIMNY), 208 to 228 (GATGSFPSWVLYPCALAMMVF), 259 to 279 (VFGLLGGTIAGGAIAAGVEFV), 283 to 303 (LFQLPGALFVVVAITIAGASL), 358 to 378 (LWGNCTIKVMVGFLFLYPAFV), 387 to 407 (WVQLGMLGLIGAAAAVGNFAG), 428 to 448 (VLVTVLAIAAAVAGSLAATAI), 490 to 510 (LAWVLGGAVGVLVYTELWVGF), and 515 to 535 (ALLILGLAQTIVSFRGDSLIP).

To M.leprae ML2143.

Its subcellular location is the cell membrane. This is an uncharacterized protein from Mycobacterium tuberculosis (strain CDC 1551 / Oshkosh).